Here is a 602-residue protein sequence, read N- to C-terminus: MQIHRLSPQLINQIAAGEVVERPASVVKELIENSLDAGATRIDIEVELGGAKVIRIRDNGYGISKKDIVLAVARHTTSKISSIEDLECIKSMGFRGEALASISSVAHLNLTSRTAKQNEAWQVYTERYTEKVMLLPIAHPVGTTVEVLDLFYNTPARRKFMRAEQTEFKHIEEVIRRMALARFDVTFILQHNNKIVQHYRAVKEPSQYWRRLSRLCGNTFVNNALKISWQNIDFSIQGWVEDPSCIKLPEMQYSYVNQRIIRNKLINHAIRHAYQDQLKGPHQPSFVIFIVINPQQLDINVHPAKKEIKFYEARKVHHFIYQALMTVLQQRVKLSSDTCYSTTQKPIGKIIPSHALNQLNEGKNNILVSYSAAAKNADELLSNQIIQDPDEAKMQDIPAKCQATKNSCSTSLSNDFYSFGKMLTFCSPCYALLESAQGLSLLSLQFAERYITERQLTPENNSDTILAQPLLIPLRIILSNGEASALHQHRLLLQRMGILLQPNENETILNAVPLPLLRKKNLSNLILDLLRYLNNETSVTYHKIASWLACSLNSQITTWNYSRAIPLIAEVERLCPHWIKNPPNALIVKLDLKMAIKALNNS.

Belongs to the DNA mismatch repair MutL/HexB family.

Functionally, this protein is involved in the repair of mismatches in DNA. It is required for dam-dependent methyl-directed DNA mismatch repair. May act as a 'molecular matchmaker', a protein that promotes the formation of a stable complex between two or more DNA-binding proteins in an ATP-dependent manner without itself being part of a final effector complex. This is DNA mismatch repair protein MutL from Baumannia cicadellinicola subsp. Homalodisca coagulata.